The primary structure comprises 155 residues: Ribonuclease H (155 aa).

Residues 4-145 (QQKVVEIYTD…ADALARKAIA (142 aa)) form the RNase H type-1 domain. Mg(2+) contacts are provided by Asp-13, Glu-51, Asp-73, and Asp-137.

The protein belongs to the RNase H family. Monomer. Requires Mg(2+) as cofactor.

The protein resides in the cytoplasm. It carries out the reaction Endonucleolytic cleavage to 5'-phosphomonoester.. In terms of biological role, endonuclease that specifically degrades the RNA of RNA-DNA hybrids. The chain is Ribonuclease H from Bartonella tribocorum (strain CIP 105476 / IBS 506).